Here is a 30-residue protein sequence, read N- to C-terminus: Cyclotide cter-F (30 aa).

Residues 1–30 constitute a cross-link (cyclopeptide (Gly-Asp)); that stretch reads GIPCGESCVFIPCISSVVGCSCKSKVCYLD. 3 disulfides stabilise this stretch: C4/C20, C8/C22, and C13/C27.

Post-translationally, contains 3 disulfide bonds. This is a cyclic peptide.

Its function is as follows. Probably participates in a plant defense mechanism. The protein is Cyclotide cter-F of Clitoria ternatea (Butterfly pea).